The chain runs to 29 residues: Cytochrome c oxidase subunit 7A1, mitochondrial (29 aa).

Residues 1 to 13 show a composition bias toward basic and acidic residues; sequence LENRVAEKQKLFQ. The tract at residues 1 to 29 is disordered; that stretch reads LENRVAEKQKLFQEDNGLPVHLKGGATDN.

This sequence belongs to the cytochrome c oxidase VIIa family. In terms of assembly, component of the complex IV (CIV, cytochrome c oxidase), a multisubunit enzyme composed of 14 subunits. The complex is composed of a catalytic core of 3 subunits MT-CO1, MT-CO2 and MT-CO3, encoded in the mitochondrial DNA, and 11 supernumerary subunits COX4I1 (or COX4I2), COX5A, COX5B, COX6A2 (or COX6A1), COX6B1 (or COX6B2), COX6C, COX7A1 (or COX7A2), COX7B, COX7C, COX8B and NDUFA4, which are encoded in the nuclear genome. The complex exists as a monomer or a dimer and forms supercomplexes (SCs) in the inner mitochondrial membrane with NADH-ubiquinone oxidoreductase (complex I, CI) and ubiquinol-cytochrome c oxidoreductase (cytochrome b-c1 complex, complex III, CIII), resulting in different assemblies (supercomplex SCI(1)III(2)IV(1) and megacomplex MCI(2)III(2)IV(2)).

The protein resides in the mitochondrion inner membrane. Its pathway is energy metabolism; oxidative phosphorylation. Component of the mitochondrial respiratory complex IV (CIV, also named cytochrome c oxidase complex), the last enzyme in the mitochondrial electron transport chain which drives oxidative phosphorylation. The CIV complex is the component of the respiratory chain that catalyzes the reduction of oxygen to water. Acts as an assembly factor that specifically drives the homodimerization of CIV complexes, mediating the formation of mitochondrial respiratory supercomplexes (respirasomes) containing two CIV: supercomplxes with two molecules of CIV show improved activity. Despite being highly expressed in brown adipose tissue, not required for thermogenesis. This is Cytochrome c oxidase subunit 7A1, mitochondrial (COX7A1) from Ovis aries (Sheep).